Reading from the N-terminus, the 232-residue chain is Acyl-protein thioesterase 1 (232 aa).

Active-site charge relay system residues include Ser-125, Asp-179, and His-212.

It belongs to the AB hydrolase superfamily. AB hydrolase 2 family.

The protein localises to the cytoplasm. It is found in the nucleus. It catalyses the reaction S-hexadecanoyl-L-cysteinyl-[protein] + H2O = L-cysteinyl-[protein] + hexadecanoate + H(+). Functionally, hydrolyzes fatty acids from S-acylated cysteine residues in proteins with a strong preference for palmitoylated G-alpha proteins over other acyl substrates. Mediates the deacylation of G-alpha proteins such as GPA1 in vivo, but has weak or no activity toward palmitoylated Ras proteins. Has weak lysophospholipase activity in vitro; however such activity may not exist in vivo. The sequence is that of Acyl-protein thioesterase 1 from Debaryomyces hansenii (strain ATCC 36239 / CBS 767 / BCRC 21394 / JCM 1990 / NBRC 0083 / IGC 2968) (Yeast).